The primary structure comprises 220 residues: Type IV major pilin protein PilA (220 aa).

The propeptide at 1-12 (MRVSRFNPRNRG) is leader sequence. Phe13 carries the post-translational modification N-methylphenylalanine. The chain crosses the membrane as a helical span at residues 13 to 33 (FTLIELMIVVAIIGILAAIAI).

It belongs to the N-Me-Phe pilin family.

The protein resides in the fimbrium. It is found in the membrane. With respect to regulation, the two-component PilS2/PilR2 is required for proper assembly of T4P and regulation. Its function is as follows. Major component of the type IV pili that are required for social gliding motility through cycles of extension and retraction. Extended pili are composed of thousands of copies of PilA and retract upon binding to extracellular polysaccharides and thereby pull the cell forward. The protein is Type IV major pilin protein PilA (pilA) of Myxococcus xanthus (strain DK1622).